Here is a 502-residue protein sequence, read N- to C-terminus: Maturase K (502 aa).

This sequence belongs to the intron maturase 2 family. MatK subfamily.

It localises to the plastid. It is found in the chloroplast. Its function is as follows. Usually encoded in the trnK tRNA gene intron. Probably assists in splicing its own and other chloroplast group II introns. This chain is Maturase K, found in Arabis blepharophylla (Coast rock-cress).